The sequence spans 52 residues: Large ribosomal subunit protein bL33 (52 aa).

It belongs to the bacterial ribosomal protein bL33 family.

The polypeptide is Large ribosomal subunit protein bL33 (Anaeromyxobacter sp. (strain Fw109-5)).